A 434-amino-acid chain; its full sequence is N-acylneuraminate cytidylyltransferase (434 aa).

Position 1 is an N-acetylmethionine (M1). Residues 1-42 form a disordered region; the sequence is MDSVEKGAATSVSNPRGRPSRGRPPKLQRNSRGGQGRGVEKP. The BC1 motif motif lies at 15-31; sequence PRGRPSRGRPPKLQRNS. An omega-N-methylarginine mark is found at R37 and R52. The substrate site is built by R52, N62, R111, S120, S122, and Q143. The short motif at 200–206 is the BC2 motif element; sequence KRPRRQD. The active site involves R201. The BC3 motif motif lies at 269–276; it reads KEKLKEIK.

Belongs to the CMP-NeuNAc synthase family. In terms of assembly, homotetramer; the active enzyme is formed by a dimer of dimers. As to expression, ubiquitously expressed. Expressed in pancreas, kidney, liver, skeletal muscle, lung, placenta, brain, heart, colon, PBL, small intestine, ovary, testis, prostate, thymus and spleen.

The protein localises to the nucleus. The enzyme catalyses an N-acylneuraminate + CTP = a CMP-N-acyl-beta-neuraminate + diphosphate. Its pathway is amino-sugar metabolism; N-acetylneuraminate metabolism. In terms of biological role, catalyzes the activation of N-acetylneuraminic acid (NeuNAc) to cytidine 5'-monophosphate N-acetylneuraminic acid (CMP-NeuNAc), a substrate required for the addition of sialic acid. Has some activity toward NeuNAc, N-glycolylneuraminic acid (Neu5Gc) or 2-keto-3-deoxy-D-glycero-D-galacto-nononic acid (KDN). In Homo sapiens (Human), this protein is N-acylneuraminate cytidylyltransferase (CMAS).